A 321-amino-acid polypeptide reads, in one-letter code: UDP-N-acetylenolpyruvoylglucosamine reductase (321 aa).

The 167-residue stretch at Arg39–Gly205 folds into the FAD-binding PCMH-type domain. Arg185 is a catalytic residue. Ser234 acts as the Proton donor in catalysis. The active site involves Glu304.

The protein belongs to the MurB family. The cofactor is FAD.

It is found in the cytoplasm. It carries out the reaction UDP-N-acetyl-alpha-D-muramate + NADP(+) = UDP-N-acetyl-3-O-(1-carboxyvinyl)-alpha-D-glucosamine + NADPH + H(+). It functions in the pathway cell wall biogenesis; peptidoglycan biosynthesis. Functionally, cell wall formation. The sequence is that of UDP-N-acetylenolpyruvoylglucosamine reductase from Bartonella quintana (strain Toulouse) (Rochalimaea quintana).